The following is a 397-amino-acid chain: Elongation factor Tu (397 aa).

The tr-type G domain occupies 10–206 (KPHCNIGTIG…AVDEYIPQPE (197 aa)). The interval 19–26 (GHIDHGKT) is G1. 19–26 (GHIDHGKT) provides a ligand contact to GTP. Threonine 26 contributes to the Mg(2+) binding site. Residues 62-66 (GITIS) form a G2 region. Positions 83–86 (DCPG) are G3. Residues 83–87 (DCPGH) and 138–141 (NKCD) contribute to the GTP site. Residues 138 to 141 (NKCD) form a G4 region. The segment at 176-178 (SAF) is G5.

This sequence belongs to the TRAFAC class translation factor GTPase superfamily. Classic translation factor GTPase family. EF-Tu/EF-1A subfamily. As to quaternary structure, monomer.

The protein localises to the cytoplasm. The enzyme catalyses GTP + H2O = GDP + phosphate + H(+). In terms of biological role, GTP hydrolase that promotes the GTP-dependent binding of aminoacyl-tRNA to the A-site of ribosomes during protein biosynthesis. This Cutibacterium acnes (strain DSM 16379 / KPA171202) (Propionibacterium acnes) protein is Elongation factor Tu.